Reading from the N-terminus, the 603-residue chain is Elongation factor 4 (603 aa).

The tr-type G domain maps to 7 to 189 (SRIRNFSIIA…SIVHLVPPPQ (183 aa)). GTP-binding positions include 19 to 24 (DHGKST) and 136 to 139 (NKID).

It belongs to the TRAFAC class translation factor GTPase superfamily. Classic translation factor GTPase family. LepA subfamily.

The protein resides in the cell inner membrane. It carries out the reaction GTP + H2O = GDP + phosphate + H(+). Functionally, required for accurate and efficient protein synthesis under certain stress conditions. May act as a fidelity factor of the translation reaction, by catalyzing a one-codon backward translocation of tRNAs on improperly translocated ribosomes. Back-translocation proceeds from a post-translocation (POST) complex to a pre-translocation (PRE) complex, thus giving elongation factor G a second chance to translocate the tRNAs correctly. Binds to ribosomes in a GTP-dependent manner. This Cyanothece sp. (strain PCC 7425 / ATCC 29141) protein is Elongation factor 4.